The following is a 300-amino-acid chain: 33 kDa chaperonin (300 aa).

2 cysteine pairs are disulfide-bonded: C235-C237 and C269-C272.

It belongs to the HSP33 family. Under oxidizing conditions two disulfide bonds are formed involving the reactive cysteines. Under reducing conditions zinc is bound to the reactive cysteines and the protein is inactive.

It is found in the cytoplasm. Functionally, redox regulated molecular chaperone. Protects both thermally unfolding and oxidatively damaged proteins from irreversible aggregation. Plays an important role in the bacterial defense system toward oxidative stress. The polypeptide is 33 kDa chaperonin (Pseudomonas syringae pv. syringae (strain B728a)).